A 204-amino-acid chain; its full sequence is FlaA locus 22.9 kDa protein (204 aa).

Positions 115-140 are disordered; that stretch reads EKTAEDQKKSSEDHTEGSADSKASSE.

This is FlaA locus 22.9 kDa protein (ylxF) from Bacillus subtilis (strain 168).